A 252-amino-acid chain; its full sequence is uncharacterized protein (252 aa).

A signal peptide spans 1-23 (MKLLKTVPAIVMLAGGMFASLNA). Residues 231–252 (EPPESAPEHTDRRTTLSLGYSM) form a disordered region.

This is an uncharacterized protein from Escherichia coli (strain K12).